The sequence spans 466 residues: 3-isopropylmalate dehydratase large subunit (466 aa).

[4Fe-4S] cluster is bound by residues cysteine 347, cysteine 407, and cysteine 410.

It belongs to the aconitase/IPM isomerase family. LeuC type 1 subfamily. As to quaternary structure, heterodimer of LeuC and LeuD. [4Fe-4S] cluster serves as cofactor.

The catalysed reaction is (2R,3S)-3-isopropylmalate = (2S)-2-isopropylmalate. Its pathway is amino-acid biosynthesis; L-leucine biosynthesis; L-leucine from 3-methyl-2-oxobutanoate: step 2/4. In terms of biological role, catalyzes the isomerization between 2-isopropylmalate and 3-isopropylmalate, via the formation of 2-isopropylmaleate. In Solibacter usitatus (strain Ellin6076), this protein is 3-isopropylmalate dehydratase large subunit.